We begin with the raw amino-acid sequence, 137 residues long: Histone H2B.3 (137 aa).

Positions 1 to 37 (KPAEKKPAEKTPVAEKAPAEKKPKAGKKLPKDAAAGD) are enriched in basic and acidic residues. The tract at residues 1–45 (KPAEKKPAEKTPVAEKAPAEKKPKAGKKLPKDAAAGDKKKKRSKK) is disordered. Residues Lys27 and Lys28 each carry the N6-acetyllysine modification. Lys133 is covalently cross-linked (Glycyl lysine isopeptide (Lys-Gly) (interchain with G-Cter in ubiquitin)).

Belongs to the histone H2B family. In terms of assembly, the nucleosome is a histone octamer containing two molecules each of H2A, H2B, H3 and H4 assembled in one H3-H4 heterotetramer and two H2A-H2B heterodimers. The octamer wraps approximately 147 bp of DNA. Post-translationally, can be acetylated to formH2BK33ac and H2BK34ac. In terms of processing, monoubiquitinated to form H2BK143ub1; may give a specific tag for epigenetic transcriptional activation. As to expression, ubiquitous. Highest level in shoots, fruits and young flower buds, including petals, anthers and ovules.

The protein resides in the nucleus. Its subcellular location is the chromosome. In terms of biological role, core component of nucleosome. Nucleosomes wrap and compact DNA into chromatin, limiting DNA accessibility to the cellular machineries which require DNA as a template. Histones thereby play a central role in transcription regulation, DNA repair, DNA replication and chromosomal stability. DNA accessibility is regulated via a complex set of post-translational modifications of histones, also called histone code, and nucleosome remodeling. This Solanum lycopersicum (Tomato) protein is Histone H2B.3 (H2B-3).